Consider the following 465-residue polypeptide: GTPase Der (465 aa).

EngA-type G domains lie at Phe3–Tyr166 and Ile184–Asn358. Residues Gly9–Ser16, Asp56–Ile60, Asn118–Asp121, Gly190–Ser197, Asp237–Val241, and Asn302–Asp305 contribute to the GTP site. Positions Lys359–Glu443 constitute a KH-like domain. The interval Phe446–Lys465 is disordered.

This sequence belongs to the TRAFAC class TrmE-Era-EngA-EngB-Septin-like GTPase superfamily. EngA (Der) GTPase family. As to quaternary structure, associates with the 50S ribosomal subunit.

GTPase that plays an essential role in the late steps of ribosome biogenesis. The sequence is that of GTPase Der from Francisella tularensis subsp. holarctica (strain FTNF002-00 / FTA).